The primary structure comprises 65 residues: Large ribosomal subunit protein uL29 (65 aa).

Belongs to the universal ribosomal protein uL29 family.

This chain is Large ribosomal subunit protein uL29, found in Bacteroides thetaiotaomicron (strain ATCC 29148 / DSM 2079 / JCM 5827 / CCUG 10774 / NCTC 10582 / VPI-5482 / E50).